We begin with the raw amino-acid sequence, 431 residues long: 3-phosphoshikimate 1-carboxyvinyltransferase (431 aa).

3-phosphoshikimate-binding residues include lysine 20, serine 21, and arginine 25. Lysine 20 provides a ligand contact to phosphoenolpyruvate. Phosphoenolpyruvate-binding residues include glycine 91 and arginine 119. Residues serine 164, glutamine 166, aspartate 317, and lysine 344 each contribute to the 3-phosphoshikimate site. Glutamine 166 is a binding site for phosphoenolpyruvate. Aspartate 317 functions as the Proton acceptor in the catalytic mechanism. Arginine 348 and arginine 390 together coordinate phosphoenolpyruvate.

The protein belongs to the EPSP synthase family. In terms of assembly, monomer.

It localises to the cytoplasm. The catalysed reaction is 3-phosphoshikimate + phosphoenolpyruvate = 5-O-(1-carboxyvinyl)-3-phosphoshikimate + phosphate. Its pathway is metabolic intermediate biosynthesis; chorismate biosynthesis; chorismate from D-erythrose 4-phosphate and phosphoenolpyruvate: step 6/7. Functionally, catalyzes the transfer of the enolpyruvyl moiety of phosphoenolpyruvate (PEP) to the 5-hydroxyl of shikimate-3-phosphate (S3P) to produce enolpyruvyl shikimate-3-phosphate and inorganic phosphate. The polypeptide is 3-phosphoshikimate 1-carboxyvinyltransferase (Aquifex aeolicus (strain VF5)).